The sequence spans 1523 residues: uncharacterized protein (1523 aa).

The segment at 1-89 (MLPTSSNNEE…GSSNMNPYDR (89 aa)) is disordered. 993-1000 (SPFGCGKS) provides a ligand contact to ATP. 2 stretches are compositionally biased toward polar residues: residues 1463–1476 (TSRQSKQQRANEYN) and 1485–1498 (QSNNDYGSQRSVTN). The disordered stretch occupies residues 1463-1498 (TSRQSKQQRANEYNSQHKHVKRQSNNDYGSQRSVTN).

This sequence belongs to the DNA2/NAM7 helicase family.

This is an uncharacterized protein from Caenorhabditis elegans.